A 231-amino-acid chain; its full sequence is Protein INCA1 (231 aa).

The segment at 75–99 is interaction with CCNA1 and CCNA1/CDK2 complex; essential for CDK2 inhibitory activity; sequence SLHPLEGLPPPEKLWRRKRKKLHLE. The Nuclear localization signal signature appears at 90 to 95; the sequence is RRKRKK. Position 180 is a phosphothreonine (T180).

Belongs to the INCA family. In terms of assembly, interacts with CCNA1. Identified in a complex with CCNA1 and CDK2. Interacts with ZNF16; the interaction inhibits INCA1 activity and induces the cell cycle process. Interacts with SPACA9. Interacts with CCNA2, CCNB1 and CCNE1. Interacts with the CCNA1/CDK2 complex. Interacts with ING5, DAZAP2, RNF26, USP15, SPOUT1, DPH7, TRIM26 and RAB5C. Phosphorylated when part of a complex with CCNA1 and CDK2.

The protein localises to the nucleus. The protein resides in the cytoplasm. Functionally, binds to CDK2-bound cyclins and inhibits the kinase activity of CDK2; binding to cyclins is critical for its function as CDK inhibitor. Inhibits cell growth and proliferation and may play a role in cell cycle control. Required for ING5-mediated regulation of S-phase progression, enhancement of Fas-induced apoptosis and inhibition of cell growth. The polypeptide is Protein INCA1 (Inca1) (Mus musculus (Mouse)).